The sequence spans 476 residues: Rho GTPase-activating protein 68F (476 aa).

Disordered stretches follow at residues Met1–Asp35 and Asp241–His266. Residues Ser29 and Ser31 each carry the phosphoserine modification. A CRAL-TRIO domain is found at Ser91 to Asn244. Residue Thr251 is modified to Phosphothreonine. Residues Asn257–His266 are compositionally biased toward polar residues. The Rho-GAP domain maps to Val276–Tyr464.

Its function is as follows. Functions as a GTPase-activating protein (GAP) for RhoA/Rho1 during gastrulation by converting it to an inactive GDP-bound state. The polypeptide is Rho GTPase-activating protein 68F (RhoGAP68F) (Drosophila melanogaster (Fruit fly)).